The sequence spans 256 residues: Pimeloyl-[acyl-carrier protein] methyl ester esterase (256 aa).

The region spanning 15–242 is the AB hydrolase-1 domain; that stretch reads HLVLLHGWGL…AAHAPFISHP (228 aa). Substrate-binding positions include Trp-22, 82–83, and 143–147; these read SL and FLALQ. The active-site Nucleophile is the Ser-82. Residues Asp-207 and His-235 contribute to the active site. His-235 provides a ligand contact to substrate.

This sequence belongs to the AB hydrolase superfamily. Carboxylesterase BioH family. Monomer.

The protein resides in the cytoplasm. The catalysed reaction is 6-carboxyhexanoyl-[ACP] methyl ester + H2O = 6-carboxyhexanoyl-[ACP] + methanol + H(+). The protein operates within cofactor biosynthesis; biotin biosynthesis. The physiological role of BioH is to remove the methyl group introduced by BioC when the pimeloyl moiety is complete. It allows to synthesize pimeloyl-ACP via the fatty acid synthetic pathway through the hydrolysis of the ester bonds of pimeloyl-ACP esters. This chain is Pimeloyl-[acyl-carrier protein] methyl ester esterase, found in Escherichia coli O45:K1 (strain S88 / ExPEC).